Reading from the N-terminus, the 71-residue chain is uncharacterized protein (71 aa).

This is an uncharacterized protein from Enterobacteria phage T4 (Bacteriophage T4).